The chain runs to 198 residues: Recombination protein RecR (198 aa).

The segment at 57–72 (CSVCHNITDTDPCRIC) adopts a C4-type zinc-finger fold. Residues 80 to 175 (SVICVVQDAK…KVTRIAHGLP (96 aa)) form the Toprim domain.

The protein belongs to the RecR family.

Its function is as follows. May play a role in DNA repair. It seems to be involved in an RecBC-independent recombinational process of DNA repair. It may act with RecF and RecO. This Halalkalibacterium halodurans (strain ATCC BAA-125 / DSM 18197 / FERM 7344 / JCM 9153 / C-125) (Bacillus halodurans) protein is Recombination protein RecR.